Here is a 368-residue protein sequence, read N- to C-terminus: 3-dehydroquinate synthase (368 aa).

It belongs to the archaeal-type DHQ synthase family.

The catalysed reaction is 2-amino-2,3,7-trideoxy-D-lyxo-hept-6-ulosonate + NAD(+) + H2O = 3-dehydroquinate + NH4(+) + NADH + H(+). Functionally, catalyzes the oxidative deamination and cyclization of 2-amino-3,7-dideoxy-D-threo-hept-6-ulosonic acid (ADH) to yield 3-dehydroquinate (DHQ), which is fed into the canonical shikimic pathway of aromatic amino acid biosynthesis. The protein is 3-dehydroquinate synthase of Methanobrevibacter smithii (strain ATCC 35061 / DSM 861 / OCM 144 / PS).